We begin with the raw amino-acid sequence, 222 residues long: uncharacterized protein (222 aa).

The tract at residues 142–222 (ARRGGCVHPP…LPDPPSAGHL (81 aa)) is disordered. Low complexity predominate over residues 160–169 (QSRSISSRRA). Positions 182-196 (PRRRPHRHRTRPQTR) are enriched in basic residues.

This sequence belongs to the Rv1128c/1148c/1588c/1702c/1945/3466 family.

This is an uncharacterized protein from Mycobacterium tuberculosis (strain CDC 1551 / Oshkosh).